The chain runs to 382 residues: Galactokinase (382 aa).

34–37 contributes to the substrate binding site; that stretch reads EHTD. 124-130 is an ATP binding site; it reads GAGLSSS. Mg(2+) contacts are provided by S130 and E162. D174 (proton acceptor) is an active-site residue. Y223 contacts substrate.

The protein belongs to the GHMP kinase family. GalK subfamily.

The protein localises to the cytoplasm. The enzyme catalyses alpha-D-galactose + ATP = alpha-D-galactose 1-phosphate + ADP + H(+). It participates in carbohydrate metabolism; galactose metabolism. In terms of biological role, catalyzes the transfer of the gamma-phosphate of ATP to D-galactose to form alpha-D-galactose-1-phosphate (Gal-1-P). The chain is Galactokinase from Escherichia coli O157:H7 (strain EC4115 / EHEC).